A 529-amino-acid polypeptide reads, in one-letter code: Bifunctional purine biosynthesis protein PurH (529 aa).

In terms of domain architecture, MGS-like spans 1 to 148 (MQQRRPVRRA…KNHKDVAIVV (148 aa)).

This sequence belongs to the PurH family.

It catalyses the reaction (6R)-10-formyltetrahydrofolate + 5-amino-1-(5-phospho-beta-D-ribosyl)imidazole-4-carboxamide = 5-formamido-1-(5-phospho-D-ribosyl)imidazole-4-carboxamide + (6S)-5,6,7,8-tetrahydrofolate. It carries out the reaction IMP + H2O = 5-formamido-1-(5-phospho-D-ribosyl)imidazole-4-carboxamide. It functions in the pathway purine metabolism; IMP biosynthesis via de novo pathway; 5-formamido-1-(5-phospho-D-ribosyl)imidazole-4-carboxamide from 5-amino-1-(5-phospho-D-ribosyl)imidazole-4-carboxamide (10-formyl THF route): step 1/1. Its pathway is purine metabolism; IMP biosynthesis via de novo pathway; IMP from 5-formamido-1-(5-phospho-D-ribosyl)imidazole-4-carboxamide: step 1/1. The polypeptide is Bifunctional purine biosynthesis protein PurH (Citrobacter koseri (strain ATCC BAA-895 / CDC 4225-83 / SGSC4696)).